Here is a 319-residue protein sequence, read N- to C-terminus: tRNA uridine(34) hydroxylase (319 aa).

Residues 127–221 form the Rhodanese domain; the sequence is KQEDTVIIDA…YGKDPEVQGE (95 aa). The active-site Cysteine persulfide intermediate is C181.

This sequence belongs to the TrhO family.

The enzyme catalyses uridine(34) in tRNA + AH2 + O2 = 5-hydroxyuridine(34) in tRNA + A + H2O. Its function is as follows. Catalyzes oxygen-dependent 5-hydroxyuridine (ho5U) modification at position 34 in tRNAs. This Bacillus cereus (strain Q1) protein is tRNA uridine(34) hydroxylase.